A 518-amino-acid chain; its full sequence is T-box transcription factor TBX5 (518 aa).

The interval 1–46 (MADTDEGFGLARTPLEPDSKDRSCDSKPESALGAPSKSPSSPQAAF) is disordered. Residues 15-28 (LEPDSKDRSCDSKP) show a composition bias toward basic and acidic residues. The segment covering 34 to 45 (APSKSPSSPQAA) has biased composition (low complexity). Residues 58–238 (LHERELWLKF…NNPFAKGFRG (181 aa)) constitute a DNA-binding region (T-box). 2 disordered regions span residues 254 to 307 (EYPV…LLPP) and 330 to 352 (ECSS…EEDT). Positions 269–301 (SNHSPFSSETRALSTSSNLGSQYQCENGVSGPS) are enriched in polar residues. Lys-339 bears the N6-acetyllysine mark.

Monomer. Homodimer (via the T-box); binds DNA as homodimer. Interacts (via the T-box) with NKX2-5 (via the homeobox); this complex binds DNA. Interacts with GATA4. Interacts with KAT2A and KAT2B. Acetylation at Lys-339 by KAT2A and KAT2B promotes nuclear retention.

It localises to the nucleus. It is found in the cytoplasm. Its function is as follows. DNA-binding protein that regulates the transcription of several genes and is involved in heart development and limb pattern formation. Binds to the core DNA motif of NPPA promoter. The sequence is that of T-box transcription factor TBX5 (Tbx5) from Mus musculus (Mouse).